The following is a 311-amino-acid chain: Formimidoylglutamase (311 aa).

Residues H122, D151, H153, D155, C242, and D244 each coordinate Mn(2+).

This sequence belongs to the arginase family. Homodimer. Mn(2+) serves as cofactor.

The enzyme catalyses N-formimidoyl-L-glutamate + H2O = formamide + L-glutamate. It participates in amino-acid degradation; L-histidine degradation into L-glutamate; L-glutamate from N-formimidoyl-L-glutamate (hydrolase route): step 1/1. In terms of biological role, catalyzes the conversion of N-formimidoyl-L-glutamate to L-glutamate and formamide. The chain is Formimidoylglutamase from Pseudomonas aeruginosa (strain ATCC 15692 / DSM 22644 / CIP 104116 / JCM 14847 / LMG 12228 / 1C / PRS 101 / PAO1).